The sequence spans 156 residues: Small ribosomal subunit protein uS7 (156 aa).

This sequence belongs to the universal ribosomal protein uS7 family. Part of the 30S ribosomal subunit. Contacts proteins S9 and S11.

One of the primary rRNA binding proteins, it binds directly to 16S rRNA where it nucleates assembly of the head domain of the 30S subunit. Is located at the subunit interface close to the decoding center, probably blocks exit of the E-site tRNA. The polypeptide is Small ribosomal subunit protein uS7 (Glaesserella parasuis serovar 5 (strain SH0165) (Haemophilus parasuis)).